A 707-amino-acid polypeptide reads, in one-letter code: Potassium-transporting ATPase ATP-binding subunit (707 aa).

Residues 1–11 are compositionally biased toward basic and acidic residues; the sequence is MNTDTQKHEDA. The segment at 1–37 is disordered; it reads MNTDTQKHEDAMSTTTPARAPHDDAPSGQQPGQGRVG. A run of 4 helical transmembrane segments spans residues 61–81, 89–109, 238–258, and 271–291; these read VMAK…TTAF, WFGW…NLAE, IALN…CATL, and MIVL…ALLS. Residue Asp-326 is the 4-aspartylphosphate intermediate of the active site. ATP-binding positions include Asp-363, Glu-367, 397–404, and Lys-415; that span reads FTAQTRMS. Asp-542 and Asp-546 together coordinate Mg(2+). A run of 3 helical transmembrane segments spans residues 612–632, 640–660, and 683–703; these read FAII…LNIM, AILS…PLAL, and LGGL…VSLI.

The protein belongs to the cation transport ATPase (P-type) (TC 3.A.3) family. Type IA subfamily. The system is composed of three essential subunits: KdpA, KdpB and KdpC.

The protein resides in the cell membrane. It catalyses the reaction K(+)(out) + ATP + H2O = K(+)(in) + ADP + phosphate + H(+). Part of the high-affinity ATP-driven potassium transport (or Kdp) system, which catalyzes the hydrolysis of ATP coupled with the electrogenic transport of potassium into the cytoplasm. This subunit is responsible for energy coupling to the transport system and for the release of the potassium ions to the cytoplasm. This chain is Potassium-transporting ATPase ATP-binding subunit, found in Streptomyces coelicolor (strain ATCC BAA-471 / A3(2) / M145).